A 433-amino-acid chain; its full sequence is Vesicle-associated protein (433 aa).

Repeat copies occupy residues 112-122 (GGGIGGGLGGG) and 219-229 (GGGIGGGLGGG). The 3 X 11 AA repeats of G-G-G-I-G-G-G-L-G-G-G stretch occupies residues 112–350 (GGGIGGGLGG…GGIGGGLGGG (239 aa)). Positions 266–274 (VDGKKKGKG) match the Nuclear localization signal motif. Copy 3 of the repeat occupies 340 to 350 (GGGIGGGLGGG). 2 disordered regions span residues 366-389 (RVGG…DGDG) and 411-433 (HGKG…NVSG). Over residues 423–433 (DIERPDLNVSG) the composition is skewed to basic and acidic residues.

In terms of tissue distribution, egg cortex.

It is found in the microsome membrane. Its subcellular location is the nucleus. The protein localises to the endoplasmic reticulum membrane. In terms of biological role, may function as a multidomain RNA-binding protein. May play a role in nuclear RNA processing and in early development. This chain is Vesicle-associated protein (VAP-1), found in Strongylocentrotus purpuratus (Purple sea urchin).